A 536-amino-acid chain; its full sequence is Nucleolar protein 58 (536 aa).

Residue Thr-34 is modified to Phosphothreonine. Phosphoserine is present on Ser-109. Lys-157 is covalently cross-linked (Glycyl lysine isopeptide (Lys-Gly) (interchain with G-Cter in SUMO2)). The Nop domain maps to 282 to 400 (IAPNVTVMVG…LEARLRILED (119 aa)). A phosphoserine mark is found at Ser-304 and Ser-351. Residues Lys-353, Lys-411, Lys-415, Lys-422, Lys-426, Lys-441, Lys-444, and Lys-465 each participate in a glycyl lysine isopeptide (Lys-Gly) (interchain with G-Cter in SUMO2) cross-link. Over residues 414-427 (AKAEKYEHKSEVKT) the composition is skewed to basic and acidic residues. The tract at residues 414-440 (AKAEKYEHKSEVKTYDPSGDSTLPTCS) is disordered. Residue Lys-467 forms a Glycyl lysine isopeptide (Lys-Gly) (interchain with G-Cter in SUMO); alternate linkage. A Glycyl lysine isopeptide (Lys-Gly) (interchain with G-Cter in SUMO1); alternate cross-link involves residue Lys-467. Lys-467 participates in a covalent cross-link: Glycyl lysine isopeptide (Lys-Gly) (interchain with G-Cter in SUMO2); alternate. The span at 470–488 (VEEEMEEEEAEEEQVVEEE) shows a compositional bias: acidic residues. Residues 470-536 (VEEEMEEEEA…KKKKKKDAED (67 aa)) are disordered. Lys-492 participates in a covalent cross-link: Glycyl lysine isopeptide (Lys-Gly) (interchain with G-Cter in SUMO2). Over residues 492 to 502 (KKKKKKDKKKH) the composition is skewed to basic residues. Lys-504 is covalently cross-linked (Glycyl lysine isopeptide (Lys-Gly) (interchain with G-Cter in SUMO); alternate). Lys-504 is covalently cross-linked (Glycyl lysine isopeptide (Lys-Gly) (interchain with G-Cter in SUMO2); alternate). A phosphoserine mark is found at Ser-509 and Ser-521. Residues 524–536 (KKKKKKKKKDAED) show a composition bias toward basic residues.

The protein belongs to the NOP5/NOP56 family. As to quaternary structure, core component of box C/D small nucleolar ribonucleoprotein (snoRNP) particles; the core proteins SNU13, NOP56, NOP58 and FBL or FBLL1 assemble stepwise onto the snoRNA. Interacts with NOLC1/Nopp140. Interacts with NOPCHAP1, NUFIP1, RUVBL1 and RUVBL2; NOPCHAP1 bridges the association of NOP58 with RUVBL1:RUVBL2 and NUFIP1. Interacts with PIH1D1. Part of the small subunit (SSU) processome, composed of more than 70 proteins and the RNA chaperone small nucleolar RNA (snoRNA) U3. Sumoylation is essential for high-affinity binding to snoRNAs.

Its subcellular location is the nucleus. The protein resides in the nucleolus. The protein localises to the nucleoplasm. Functionally, required for the biogenesis of box C/D snoRNAs such as U3, U8 and U14 snoRNAs. Part of the small subunit (SSU) processome, first precursor of the small eukaryotic ribosomal subunit. During the assembly of the SSU processome in the nucleolus, many ribosome biogenesis factors, an RNA chaperone and ribosomal proteins associate with the nascent pre-rRNA and work in concert to generate RNA folding, modifications, rearrangements and cleavage as well as targeted degradation of pre-ribosomal RNA by the RNA exosome. Core component of box C/D small nucleolar ribonucleoprotein (snoRNP) complexes that function in methylation of multiple sites on ribosomal RNAs (rRNAs) and messenger RNAs (mRNAs). This Mus musculus (Mouse) protein is Nucleolar protein 58 (Nop58).